The chain runs to 200 residues: Guanylyl cyclase-activating protein 2 (200 aa).

The N-myristoyl glycine moiety is linked to residue Gly2. EF-hand domains follow at residues 14 to 31, 53 to 88, 89 to 124, and 141 to 176; these read GEID…FVME, EASQ…VLRG, TLEH…IYQL, and TPEE…DKWV. Ca(2+)-binding residues include Asp66, Asn68, Asp70, Thr72, Glu77, Asp102, Asp104, Asn106, Cys108, Glu113, Asp154, Asn156, Asp158, Gln160, and Glu165.

The N-terminus is blocked. In the retina, it is expressed in cone and rod photoreceptor cells.

The protein resides in the cell membrane. The protein localises to the photoreceptor inner segment. Its subcellular location is the cell projection. It localises to the cilium. It is found in the photoreceptor outer segment. Stimulates two retinal guanylyl cyclases (GCs) GUCY2D and GUCY2F when free calcium ions concentration is low, and inhibits GUCY2D and GUCY2F when free calcium ions concentration is elevated. This Ca(2+)-sensitive regulation of GCs is a key event in recovery of the dark state of rod photoreceptors following light exposure. May be involved in cone photoreceptor response and recovery of response in bright light. The protein is Guanylyl cyclase-activating protein 2 (GUCA1B) of Homo sapiens (Human).